The following is a 428-amino-acid chain: ETS domain-containing protein Elk-1 (428 aa).

Positions 5-86 form a DNA-binding region, ETS; the sequence is VTLWQFLLQL…SGQKFVYKFV (82 aa). 3 disordered regions span residues 121-149, 165-205, and 228-358; these read AAPG…ARSS, QSLQ…SPLE, and NLKS…SLLP. The span at 177-205 shows a compositional bias: low complexity; that stretch reads PAVVLPSAAPAGAAAPPSGSRSTSPSPLE. Residues Lys230, Lys249, and Lys254 each participate in a glycyl lysine isopeptide (Lys-Gly) (interchain with G-Cter in SUMO) cross-link. Basic and acidic residues predominate over residues 248-261; the sequence is VKVEGPKEELEVAG. The residue at position 324 (Ser324) is a Phosphoserine; by MAPK1. 4 positions are modified to phosphothreonine; by MAPK1: Thr336, Thr353, Thr363, and Thr368. Positions 349 to 399 are sufficient for interaction with MAD2L2; sequence GPALTPSLLPTHTLTPVLLTPSSLPPSIHFWSTLSPIAPRSPAKLSFQFPS. Thr381 carries an O-linked (GlcNAc) threonine glycan. Phosphoserine; by MAPK1 and MAPK8 is present on Ser383. A Phosphoserine; by MAPK1 modification is found at Ser389. Thr417 carries the post-translational modification Phosphothreonine; by MAPK1. Ser422 is subject to Phosphoserine; by MAPK1.

It belongs to the ETS family. As to quaternary structure, interacts in its sumoylated form with PIAS2/PIASX which enhances its transcriptional activator activity. Interacts with MAD2L2; the interaction is direct and promotes phosphorylation by the kinases MAPK8 and/or MAPK9. Interacts with POU1F1. Sumoylation represses transcriptional activator activity as it results in recruitment of HDAC2 to target gene promoters which leads to decreased histone acetylation and reduced transactivator activity. It also regulates nuclear retention. In terms of processing, on mitogenic stimulation, phosphorylated on C-terminal serine and threonine residues by MAPK1. Ser-383 and Ser-389 are the preferred sites for MAPK1. In vitro, phosphorylation by MAPK1 potentiates ternary complex formation with the serum responses factors, SRE and SRF. Also phosphorylated on Ser-383 by MAPK8 and/or MAKP9. Phosphorylation leads to loss of sumoylation and restores transcriptional activator activity. Phosphorylated and activated by CAMK4, MAPK11, MAPK12 and MAPK14. Upon bFGF stimulus, phosphorylated by PAK1. Phosphorylated by PRP4K at Thr-417; phosphorylation activation ELK1 transcriptional activity. As to expression, lung and testis.

The protein localises to the nucleus. Its function is as follows. Transcription factor that binds to purine-rich DNA sequences. Forms a ternary complex with SRF and the ETS and SRF motifs of the serum response element (SRE) on the promoter region of immediate early genes such as FOS and IER2. Induces target gene transcription upon JNK and MAPK-signaling pathways stimulation. This is ETS domain-containing protein Elk-1 from Homo sapiens (Human).